We begin with the raw amino-acid sequence, 227 residues long: Cytochrome c oxidase subunit 2 (227 aa).

The Mitochondrial intermembrane segment spans residues 1–14 (MPYPLQLGLQDATS). Residues 15–45 (PIMEELTHFHDHTLMIVFLISSLVLYIISSM) traverse the membrane as a helical segment. Topologically, residues 46–59 (LTTKLTHTSTMDAQ) are mitochondrial matrix. A helical membrane pass occupies residues 60-87 (EVETIWTILPAMILILIALPSLRILYMM). The Mitochondrial intermembrane segment spans residues 88–227 (DEINDPSLTV…YFEDWSASLL (140 aa)). Residues His161, Cys196, Glu198, Cys200, His204, and Met207 each coordinate Cu cation. Glu198 contacts Mg(2+).

This sequence belongs to the cytochrome c oxidase subunit 2 family. Component of the cytochrome c oxidase (complex IV, CIV), a multisubunit enzyme composed of 14 subunits. The complex is composed of a catalytic core of 3 subunits MT-CO1, MT-CO2 and MT-CO3, encoded in the mitochondrial DNA, and 11 supernumerary subunits COX4I, COX5A, COX5B, COX6A, COX6B, COX6C, COX7A, COX7B, COX7C, COX8 and NDUFA4, which are encoded in the nuclear genome. The complex exists as a monomer or a dimer and forms supercomplexes (SCs) in the inner mitochondrial membrane with NADH-ubiquinone oxidoreductase (complex I, CI) and ubiquinol-cytochrome c oxidoreductase (cytochrome b-c1 complex, complex III, CIII), resulting in different assemblies (supercomplex SCI(1)III(2)IV(1) and megacomplex MCI(2)III(2)IV(2)). Found in a complex with TMEM177, COA6, COX18, COX20, SCO1 and SCO2. Interacts with TMEM177 in a COX20-dependent manner. Interacts with COX20. Interacts with COX16. It depends on Cu cation as a cofactor.

The protein localises to the mitochondrion inner membrane. It catalyses the reaction 4 Fe(II)-[cytochrome c] + O2 + 8 H(+)(in) = 4 Fe(III)-[cytochrome c] + 2 H2O + 4 H(+)(out). In terms of biological role, component of the cytochrome c oxidase, the last enzyme in the mitochondrial electron transport chain which drives oxidative phosphorylation. The respiratory chain contains 3 multisubunit complexes succinate dehydrogenase (complex II, CII), ubiquinol-cytochrome c oxidoreductase (cytochrome b-c1 complex, complex III, CIII) and cytochrome c oxidase (complex IV, CIV), that cooperate to transfer electrons derived from NADH and succinate to molecular oxygen, creating an electrochemical gradient over the inner membrane that drives transmembrane transport and the ATP synthase. Cytochrome c oxidase is the component of the respiratory chain that catalyzes the reduction of oxygen to water. Electrons originating from reduced cytochrome c in the intermembrane space (IMS) are transferred via the dinuclear copper A center (CU(A)) of subunit 2 and heme A of subunit 1 to the active site in subunit 1, a binuclear center (BNC) formed by heme A3 and copper B (CU(B)). The BNC reduces molecular oxygen to 2 water molecules using 4 electrons from cytochrome c in the IMS and 4 protons from the mitochondrial matrix. The protein is Cytochrome c oxidase subunit 2 (MT-CO2) of Dugong dugon (Dugong).